We begin with the raw amino-acid sequence, 107 residues long: Small ribosomal subunit protein bS16m (107 aa).

Belongs to the bacterial ribosomal protein bS16 family. Component of the mitochondrial small ribosomal subunit (mt-SSU). Mature N.crassa 74S mitochondrial ribosomes consist of a small (37S) and a large (54S) subunit. The 37S small subunit contains a 16S ribosomal RNA (16S mt-rRNA) and 32 different proteins. The 54S large subunit contains a 23S rRNA (23S mt-rRNA) and 42 different proteins.

It is found in the mitochondrion. Component of the mitochondrial ribosome (mitoribosome), a dedicated translation machinery responsible for the synthesis of mitochondrial genome-encoded proteins, including at least some of the essential transmembrane subunits of the mitochondrial respiratory chain. The mitoribosomes are attached to the mitochondrial inner membrane and translation products are cotranslationally integrated into the membrane. The sequence is that of Small ribosomal subunit protein bS16m (cyt-21) from Neurospora crassa (strain ATCC 24698 / 74-OR23-1A / CBS 708.71 / DSM 1257 / FGSC 987).